We begin with the raw amino-acid sequence, 1018 residues long: MFYKACPSTLTCSKWIHSIIKTKKFLYCRHYSSKSFIDNAPLRINPVGVQYLSPALQNQVFPQQNTQISQLHLDLAKFHLAKHQLLNKETIKLPSFNFRLPPLQGKTISEHFYNIGLEFAEPHLSKAIKFSKIDTPVQPKTWKRQPGWTKYAKDGSISCVPYPDSDCMVFDVEVLYKVSPFAVVATAVSEDAWYCWLSPWLLGKSENDRQLIPSNPKGALFVGHNVSFDRQRIREEYNIKSSRNVFLDTMSLHVATHGMCSRQKPTWFKARKAYIRSQSTETSEDDDSSSFDDDYQNYLKQEPWLAHSSVNSLKDVAKFHCNITLDKSKRDDFASLEKEPILQKLNELITYCAHDTYSTHQVFKKVFPQFLEVCPHPATFSAMLSLGSVFLPVNHSWTRYINGVEEQYQQMIQLVDQKLSQYAEKAKDLINTKDTVLKDPWLRQLDWTPCNLYRKLKKATQEVPVVPKWYKKAYCKTEKRAVITAKSRLAPILLRLKWKKHPLAWSDTYGWVFSVERTSKDEIEMLLDQGLVPCSREEDTKLDYNNYIFFKVPHKDGPEARCGSPLSKSYQRYFEEGILQSDYEVAKKALEMSASCSYWSSARDRIRSQMVVWDKDAELGVPSSVDGFGIILPCIIPMGTVTRRAVENTWLTASNSKKNRLGSELKAMIRAPDGYTFVGADVDSEELWIVALMGDSQFRLHGATALGMMTLEGKKSEGTDLHSKTAAILGVSRDSAKVFNYGRLYGAGLKHTTLLLMQMNPTLKTAEAKELAKKLYASTKGVKSKMSKRLQEMGLPKLTFWSQGTESFVFNKLEAMAQLPSPRTPVLDAGITQALSSKNLSKNSFMTSRVNWAIQSSAVDYLHLLLVSMNHLIKKYYLEARLSLTVHDEVRYLSSDKDKYRVAFALQVANLWTRAFFCQRLGINELPQSVAFFSSVDIDHVLRKDVKMDCVTPSNKVPIPPGEELTIESVLEKLEQSGQSLEPLEQIQCFVDVKATTSAEITEEDKKNIAYLKAQAFY.

Belongs to the DNA polymerase type-A family. The cofactor is Mg(2+).

It localises to the mitochondrion. The catalysed reaction is DNA(n) + a 2'-deoxyribonucleoside 5'-triphosphate = DNA(n+1) + diphosphate. Involved in the replication of mitochondrial DNA. The protein is DNA polymerase gamma (mip1) of Schizosaccharomyces pombe (strain 972 / ATCC 24843) (Fission yeast).